We begin with the raw amino-acid sequence, 488 residues long: 3-octaprenyl-4-hydroxybenzoate carboxy-lyase (488 aa).

Residue Asn-172 participates in Mn(2+) binding. Prenylated FMN-binding positions include 175–177, 189–191, and 194–195; these read IYR, RWL, and RG. Glu-238 lines the Mn(2+) pocket. Asp-287 acts as the Proton donor in catalysis.

Belongs to the UbiD family. Homohexamer. Prenylated FMN is required as a cofactor. The cofactor is Mn(2+).

It localises to the cell membrane. It carries out the reaction a 4-hydroxy-3-(all-trans-polyprenyl)benzoate + H(+) = a 2-(all-trans-polyprenyl)phenol + CO2. It functions in the pathway cofactor biosynthesis; ubiquinone biosynthesis. Its function is as follows. Catalyzes the decarboxylation of 3-octaprenyl-4-hydroxy benzoate to 2-octaprenylphenol, an intermediate step in ubiquinone biosynthesis. The chain is 3-octaprenyl-4-hydroxybenzoate carboxy-lyase from Pseudomonas putida (strain GB-1).